A 223-amino-acid polypeptide reads, in one-letter code: Deoxyribose-phosphate aldolase (223 aa).

Asp89 functions as the Proton donor/acceptor in the catalytic mechanism. Lys152 functions as the Schiff-base intermediate with acetaldehyde in the catalytic mechanism. Residue Lys181 is the Proton donor/acceptor of the active site.

This sequence belongs to the DeoC/FbaB aldolase family. DeoC type 1 subfamily.

Its subcellular location is the cytoplasm. The catalysed reaction is 2-deoxy-D-ribose 5-phosphate = D-glyceraldehyde 3-phosphate + acetaldehyde. It functions in the pathway carbohydrate degradation; 2-deoxy-D-ribose 1-phosphate degradation; D-glyceraldehyde 3-phosphate and acetaldehyde from 2-deoxy-alpha-D-ribose 1-phosphate: step 2/2. Its function is as follows. Catalyzes a reversible aldol reaction between acetaldehyde and D-glyceraldehyde 3-phosphate to generate 2-deoxy-D-ribose 5-phosphate. The sequence is that of Deoxyribose-phosphate aldolase from Bacillus cytotoxicus (strain DSM 22905 / CIP 110041 / 391-98 / NVH 391-98).